The chain runs to 265 residues: Pyridoxine 5'-phosphate synthase (265 aa).

Residue Asn6 coordinates 3-amino-2-oxopropyl phosphate. 8–9 (DH) is a 1-deoxy-D-xylulose 5-phosphate binding site. 3-amino-2-oxopropyl phosphate is bound at residue Arg17. His42 (proton acceptor) is an active-site residue. The 1-deoxy-D-xylulose 5-phosphate site is built by Arg44 and His49. Residue Glu69 is the Proton acceptor of the active site. Residue Thr99 participates in 1-deoxy-D-xylulose 5-phosphate binding. The active-site Proton donor is His213. 3-amino-2-oxopropyl phosphate is bound by residues Gly214 and 235 to 236 (GQ).

The protein belongs to the PNP synthase family. Homooctamer; tetramer of dimers.

It is found in the cytoplasm. It catalyses the reaction 3-amino-2-oxopropyl phosphate + 1-deoxy-D-xylulose 5-phosphate = pyridoxine 5'-phosphate + phosphate + 2 H2O + H(+). It functions in the pathway cofactor biosynthesis; pyridoxine 5'-phosphate biosynthesis; pyridoxine 5'-phosphate from D-erythrose 4-phosphate: step 5/5. In terms of biological role, catalyzes the complicated ring closure reaction between the two acyclic compounds 1-deoxy-D-xylulose-5-phosphate (DXP) and 3-amino-2-oxopropyl phosphate (1-amino-acetone-3-phosphate or AAP) to form pyridoxine 5'-phosphate (PNP) and inorganic phosphate. The sequence is that of Pyridoxine 5'-phosphate synthase from Nitratiruptor sp. (strain SB155-2).